Consider the following 313-residue polypeptide: tRNA-cytidine(32) 2-sulfurtransferase (313 aa).

Positions 50–55 (SGGKDS) match the PP-loop motif motif. C125, C128, and C216 together coordinate [4Fe-4S] cluster.

Belongs to the TtcA family. In terms of assembly, homodimer. Mg(2+) is required as a cofactor. The cofactor is [4Fe-4S] cluster.

It localises to the cytoplasm. The enzyme catalyses cytidine(32) in tRNA + S-sulfanyl-L-cysteinyl-[cysteine desulfurase] + AH2 + ATP = 2-thiocytidine(32) in tRNA + L-cysteinyl-[cysteine desulfurase] + A + AMP + diphosphate + H(+). Its pathway is tRNA modification. Catalyzes the ATP-dependent 2-thiolation of cytidine in position 32 of tRNA, to form 2-thiocytidine (s(2)C32). The sulfur atoms are provided by the cysteine/cysteine desulfurase (IscS) system. The chain is tRNA-cytidine(32) 2-sulfurtransferase from Haemophilus influenzae (strain ATCC 51907 / DSM 11121 / KW20 / Rd).